We begin with the raw amino-acid sequence, 309 residues long: Mitochondrial substrate carrier family protein ancA (309 aa).

3 Solcar repeats span residues 10-102, 114-203, and 216-299; these read SSFV…YKKF, KFFI…AKGI, and ASWG…IQKL. Transmembrane regions (helical) follow at residues 12 to 41, 79 to 103, 113 to 133, 181 to 201, and 215 to 235; these read FVKDSLIGGTAGGVSKTIVAPIERVKLLLQ, LANVIRYFPTQALNFAFKDKYKKFF, TKFFIGNLLSGGAAGATSLLF, VSVGGIFVYRAAFFGGYDTAK, and WASWGIAQVVTTIAGVVSYPF. Residues Arg84 and Lys96 each contribute to the ADP site. Arg239 is an ADP binding site. The segment at 239-244 is important for transport activity; sequence RRRMMM. The short motif at 239–244 is the Nucleotide carrier signature motif element; it reads RRRMMM. Residues 276-293 traverse the membrane as a helical segment; the sequence is ALSNAIRGSGGALVLVIY.

Belongs to the mitochondrial carrier (TC 2.A.29) family. As to quaternary structure, monomer.

Its subcellular location is the mitochondrion inner membrane. The catalysed reaction is ADP(in) + ATP(out) = ADP(out) + ATP(in). With respect to regulation, the matrix-open state (m-state) is inhibited by the membrane-permeable bongkrekic acid (BKA). The cytoplasmic-open state (c-state) is inhibited by the membrane-impermeable toxic inhibitor carboxyatractyloside (CATR). In terms of biological role, ADP:ATP antiporter that mediates import of ADP into the mitochondrial matrix for ATP synthesis, and export of ATP out to fuel the cell. Cycles between the cytoplasmic-open state (c-state) and the matrix-open state (m-state): operates by the alternating access mechanism with a single substrate-binding site intermittently exposed to either the cytosolic (c-state) or matrix (m-state) side of the inner mitochondrial membrane. The polypeptide is Mitochondrial substrate carrier family protein ancA (ancA) (Dictyostelium discoideum (Social amoeba)).